Reading from the N-terminus, the 2890-residue chain is Bifunctional DNA-directed RNA polymerase subunit beta-beta' (2890 aa).

The tract at residues 1 to 1377 (MSKKIPLKNR…DINIFGDDVD (1377 aa)) is DNA-directed RNA polymerase subunit beta. Residues 1384–2890 (PIMIKEDDRP…LRALEDNSKF (1507 aa)) form a DNA-directed RNA polymerase subunit beta' region. Zn(2+)-binding residues include C1449, C1451, C1465, and C1468. Residues D1849, D1851, and D1853 each contribute to the Mg(2+) site. The Zn(2+) site is built by C2179, C2253, C2260, and C2263.

In the N-terminal section; belongs to the RNA polymerase beta chain family. The protein in the C-terminal section; belongs to the RNA polymerase beta' chain family. As to quaternary structure, the RNAP catalytic core consists of 2 alpha, 1 beta/beta' and 1 omega subunit. When a sigma factor is associated with the core the holoenzyme is formed, which can initiate transcription. The cofactor is Mg(2+). Zn(2+) serves as cofactor.

The catalysed reaction is RNA(n) + a ribonucleoside 5'-triphosphate = RNA(n+1) + diphosphate. Its function is as follows. DNA-dependent RNA polymerase catalyzes the transcription of DNA into RNA using the four ribonucleoside triphosphates as substrates. The sequence is that of Bifunctional DNA-directed RNA polymerase subunit beta-beta' (rpoBC) from Helicobacter pylori (strain J99 / ATCC 700824) (Campylobacter pylori J99).